The chain runs to 578 residues: Proline--tRNA ligase (578 aa).

This sequence belongs to the class-II aminoacyl-tRNA synthetase family. ProS type 1 subfamily. Homodimer.

It localises to the cytoplasm. It carries out the reaction tRNA(Pro) + L-proline + ATP = L-prolyl-tRNA(Pro) + AMP + diphosphate. Its function is as follows. Catalyzes the attachment of proline to tRNA(Pro) in a two-step reaction: proline is first activated by ATP to form Pro-AMP and then transferred to the acceptor end of tRNA(Pro). As ProRS can inadvertently accommodate and process non-cognate amino acids such as alanine and cysteine, to avoid such errors it has two additional distinct editing activities against alanine. One activity is designated as 'pretransfer' editing and involves the tRNA(Pro)-independent hydrolysis of activated Ala-AMP. The other activity is designated 'posttransfer' editing and involves deacylation of mischarged Ala-tRNA(Pro). The misacylated Cys-tRNA(Pro) is not edited by ProRS. The sequence is that of Proline--tRNA ligase from Burkholderia thailandensis (strain ATCC 700388 / DSM 13276 / CCUG 48851 / CIP 106301 / E264).